The primary structure comprises 547 residues: Sodium-coupled neutral amino acid transporter 4 (547 aa).

The segment at 1–26 (MDPMELRNVNIEPDDESSSGESVPDS) is disordered. Residues 1–104 (MDPMELRNVN…GLSYAMANTG (104 aa)) are Extracellular-facing. Position 49 is a phosphoserine (Ser-49). The helical transmembrane segment at 105–125 (IILFIIMLLAVAILSLYSVHL) threads the bilayer. The Cytoplasmic portion of the chain corresponds to 126–151 (LLKTAKEGGSLIYEKLGEKAFGWPGK). The helical transmembrane segment at 152–172 (IGAFISITMQNIGAMSSYLFI) threads the bilayer. Over 173 to 195 (IKYELPEVIRAFMGLEENTGEWY) the chain is Extracellular. A helical membrane pass occupies residues 196-216 (PNGNYLIVFVSLGIILPLSLL). The Cytoplasmic portion of the chain corresponds to 217 to 220 (KNLG). Residues 221–241 (YLGYTSGFSLTCMVFFVSVVI) form a helical membrane-spanning segment. Topologically, residues 242 to 332 (YKKFQIPCPL…PKYFVFNSRT (91 aa)) are extracellular. Residues Cys-249 and Cys-321 are joined by a disulfide bond. Asn-260, Asn-264, and Asn-276 each carry an N-linked (GlcNAc...) asparagine glycan. The chain crosses the membrane as a helical span at residues 333-353 (AYAIPILAFAFVCHPEVLPIY). At 354–369 (SELKDRSRRKMQTVSN) the chain is on the cytoplasmic side. Residues 370 to 390 (ISITGMLVMYLLAALFGYLTF) form a helical membrane-spanning segment. Topologically, residues 391–411 (YGEVEDELLHAYSKVYTFDIP) are extracellular. A helical membrane pass occupies residues 412–432 (LLMVRLAVLVAVTLTVPIVLF). Over 433 to 453 (PIRTSVTTLLFPKRPFSWIRH) the chain is Cytoplasmic. A helical membrane pass occupies residues 454-474 (FLIAAVLIALNNVLVILVPTI). The Extracellular segment spans residues 475-476 (KY). A helical transmembrane segment spans residues 477-497 (IFGFIGASSATMLIFILPAVF). Residues 498–514 (YLKLVKKESFRSPQKVG) lie on the Cytoplasmic side of the membrane. Residues 515-535 (ALIFLVVGIIFMIGSMALIII) form a helical membrane-spanning segment. The Extracellular segment spans residues 536-547 (DWIYDPPNSKHH).

This sequence belongs to the amino acid/polyamine transporter 2 family. In terms of processing, the disulfide bond plays an important role in substrate transport, but has no effect on trafficking to the cell surface.

The protein resides in the cell membrane. Its subcellular location is the cell projection. It localises to the microvillus membrane. The enzyme catalyses L-methionine(in) + Na(+)(in) = L-methionine(out) + Na(+)(out). It catalyses the reaction L-asparagine(in) + Na(+)(in) = L-asparagine(out) + Na(+)(out). The catalysed reaction is L-threonine(in) + Na(+)(in) = L-threonine(out) + Na(+)(out). It carries out the reaction L-serine(in) + Na(+)(in) = L-serine(out) + Na(+)(out). The enzyme catalyses glycine(in) + Na(+)(in) = glycine(out) + Na(+)(out). It catalyses the reaction L-alanine(in) + Na(+)(in) = L-alanine(out) + Na(+)(out). The catalysed reaction is L-glutamine(in) + Na(+)(in) = L-glutamine(out) + Na(+)(out). It carries out the reaction L-histidine(in) + Na(+)(in) = L-histidine(out) + Na(+)(out). The enzyme catalyses L-cysteine(in) + Na(+)(in) = L-cysteine(out) + Na(+)(out). It catalyses the reaction L-proline(in) + Na(+)(in) = L-proline(out) + Na(+)(out). Its function is as follows. Symporter that cotransports neutral amino acids and sodium ions from the extraccellular to the intracellular side of the cell membrane. The transport is electrogenic, pH dependent and partially tolerates substitution of Na(+) by Li(+). Preferentially transports smaller amino acids, such as glycine, L-alanine, L-serine, L-asparagine and L-threonine, followed by L-cysteine, L-histidine, L-proline and L-glutamine and L-methionine. The sequence is that of Sodium-coupled neutral amino acid transporter 4 from Pongo abelii (Sumatran orangutan).